The sequence spans 62 residues: MDHSVLNVLVCPICKANLYYDKENQVLVCKADKLAYPIRENIPVMLVEEAKKMTLEEVKKYG.

The protein belongs to the UPF0434 family.

The sequence is that of UPF0434 protein FTL_1400 from Francisella tularensis subsp. holarctica (strain LVS).